The following is a 639-amino-acid chain: Protein phosphatase EYA4 (639 aa).

At M1 the chain carries N-acetylmethionine. 3 disordered regions span residues 1–72 (MEDS…GGEN), 210–232 (QTQS…PQPG), and 300–368 (ADGT…DSDL). A Glycyl lysine isopeptide (Lys-Gly) (interchain with G-Cter in SUMO2) cross-link involves residue K14. Over residues 18–30 (ESDVSQSQNSRSM) the composition is skewed to polar residues. K52 is covalently cross-linked (Glycyl lysine isopeptide (Lys-Gly) (interchain with G-Cter in SUMO2)). Low complexity predominate over residues 56 to 66 (SNLSSTSVTTN). Polar residues predominate over residues 300 to 334 (ADGTPSSTSTYQLQESLPGLTNQPGEFDTMQSPST). Position 361 is a phosphoserine (S361). D375 (nucleophile) is an active-site residue. Residues D375, D377, and D603 each coordinate Mg(2+). Residue D377 is the Proton donor of the active site.

This sequence belongs to the HAD-like hydrolase superfamily. EYA family. As to quaternary structure, interacts with SIX3; translocates EYA4 from the cytoplasm to the nucleus and promotes activation of their target genes. Requires Mg(2+) as cofactor. As to expression, highly expressed in heart and skeletal muscle.

It is found in the cytoplasm. The protein localises to the nucleus. The catalysed reaction is O-phospho-L-tyrosyl-[protein] + H2O = L-tyrosyl-[protein] + phosphate. Its function is as follows. Tyrosine phosphatase that specifically dephosphorylates 'Tyr-142' of histone H2AX (H2AXY142ph). 'Tyr-142' phosphorylation of histone H2AX plays a central role in DNA repair and acts as a mark that distinguishes between apoptotic and repair responses to genotoxic stress. Promotes efficient DNA repair by dephosphorylating H2AX, promoting the recruitment of DNA repair complexes containing MDC1. Its function as histone phosphatase probably explains its role in transcription regulation during organogenesis. May be involved in development of the eye. This Homo sapiens (Human) protein is Protein phosphatase EYA4 (EYA4).